Reading from the N-terminus, the 149-residue chain is Large ribosomal subunit protein bL9 (149 aa).

The protein belongs to the bacterial ribosomal protein bL9 family.

Its function is as follows. Binds to the 23S rRNA. In Geobacillus kaustophilus (strain HTA426), this protein is Large ribosomal subunit protein bL9.